The chain runs to 500 residues: Lysine--tRNA ligase (500 aa).

The Mg(2+) site is built by Asp-412 and Glu-419.

This sequence belongs to the class-II aminoacyl-tRNA synthetase family. In terms of assembly, homodimer. Mg(2+) serves as cofactor.

The protein localises to the cytoplasm. It carries out the reaction tRNA(Lys) + L-lysine + ATP = L-lysyl-tRNA(Lys) + AMP + diphosphate. This chain is Lysine--tRNA ligase, found in Kineococcus radiotolerans (strain ATCC BAA-149 / DSM 14245 / SRS30216).